Reading from the N-terminus, the 400-residue chain is Haptoglobin (400 aa).

Positions 1-18 (MSALPVVVTLLLCGQLLA) are cleaved as a signal peptide. 2 Sushi domains span residues 28–83 (DSCP…ECED) and 84–141 (ASCP…ECEA). Cystine bridges form between C49-C81, C105-C139, and C143-C260. One can recognise a Peptidase S1 domain in the interval 156 to 398 (IIGGSLDAKG…ILDWVRKTIA (243 aa)). N285, N309, and N315 each carry an N-linked (GlcNAc...) asparagine glycan. 2 disulfides stabilise this stretch: C303–C334 and C345–C375. The tract at residues 312 to 317 (VPENKT) is interaction with CD163.

It belongs to the peptidase S1 family. Tetramer of two alpha and two beta chains; disulfide-linked. The hemoglobin/haptoglobin complex is composed of a haptoglobin dimer bound to two hemoglobin alpha-beta dimers. Interacts with CD163. Interacts with ERGIC3. Expressed by the liver and secreted in plasma.

The protein localises to the secreted. It localises to the extracellular space. Its function is as follows. As a result of hemolysis, hemoglobin is found to accumulate in the kidney and is secreted in the urine. Haptoglobin captures, and combines with free plasma hemoglobin to allow hepatic recycling of heme iron and to prevent kidney damage. Haptoglobin also acts as an antioxidant, has antibacterial activity and plays a role in modulating many aspects of the acute phase response. Hemoglobin/haptoglobin complexes are rapidly cleared by the macrophage CD163 scavenger receptor expressed on the surface of liver Kupfer cells through an endocytic lysosomal degradation pathway. The sequence is that of Haptoglobin (HP) from Cervus elaphus (Red deer).